The sequence spans 303 residues: Lysosomal amino acid transporter 1 homolog (303 aa).

Over 1-38 (MAEGLRAPPPPGNGSECPDGARWVLRLLGECARDGRDV) the chain is Lumenal. A glycan (N-linked (GlcNAc...) asparagine) is linked at asparagine 13. The 67-residue stretch at 36 to 102 (RDVGSALLGL…LANQLPLQVY (67 aa)) folds into the PQ-loop 1 domain. A helical membrane pass occupies residues 39–59 (GSALLGLLSIGCFAAAALPQF). The Cytoplasmic portion of the chain corresponds to 60 to 73 (YQACKTGIMDRALS). Residues 74–94 (IYFLLGWLGGDLLNLIGSFLA) traverse the membrane as a helical segment. The Lumenal portion of the chain corresponds to 95 to 96 (NQ). A helical membrane pass occupies residues 97-117 (LPLQVYTAVYYVLADLVMLSL). Over 118-131 (YGYYKAKNWGTGAT) the chain is Cytoplasmic. Residues 132-152 (ASINAACLFCLLGTATTLTVL) form a helical membrane-spanning segment. The Lumenal portion of the chain corresponds to 153–182 (SHDTGPAPNPAAFGGRSLLSLGLEGPGPEP). The helical transmembrane segment at 183-203 (ISKTEIIGFAIGSISSVLYLC) threads the bilayer. One can recognise a PQ-loop 2 domain in the interval 186 to 251 (TEIIGFAIGS…LKNPEPGQSE (66 aa)). At 204-220 (SRLPQIYTNYRRKSTAG) the chain is on the cytoplasmic side. A helical transmembrane segment spans residues 221–241 (VSFLLFALVMLGNLLYGTSVL). Residues 242-260 (LKNPEPGQSEGDYILHHLP) lie on the Lumenal side of the membrane. Residues 261 to 281 (WLIGSLGVLSLDVIISFQFLA) form a helical membrane-spanning segment. At 282 to 303 (YRTGQPSAGEEREALLAEHGDS) the chain is on the cytoplasmic side. Residues 296-297 (LL) carry the Di-leucine motif motif.

It belongs to the laat-1 family.

The protein localises to the lysosome membrane. In terms of biological role, amino acid transporter that specifically mediates the pH-dependent export of the cationic amino acids arginine, histidine and lysine from lysosomes. The polypeptide is Lysosomal amino acid transporter 1 homolog (SLC66A1) (Gallus gallus (Chicken)).